A 141-amino-acid chain; its full sequence is Cystatin (141 aa).

The signal sequence occupies residues 1–26 (MVHSQLPVAAPLRLLCALLLLPSATM). The Cystatin domain occupies 29-129 (GGLYPRSVTD…CHFQVWSRPW (101 aa)). Residues 73 to 77 (QVVTG) carry the Secondary area of contact motif. 2 disulfides stabilise this stretch: cysteine 91–cysteine 107 and cysteine 120–cysteine 140.

It belongs to the cystatin family. In terms of tissue distribution, expressed by the venom gland at an extremely low level (at protein level).

The protein localises to the secreted. Inhibits various C1 cysteine proteases including cathepsin L, papain and cathepsin B. This protein has no toxic activity and its function in the venom is unknown. It may play a role as a housekeeping or regulatory protein. This Tropidechis carinatus (Australian rough-scaled snake) protein is Cystatin.